The primary structure comprises 256 residues: Large ribosomal subunit protein bL28m (256 aa).

A mitochondrion-targeting transit peptide spans 1–55 (MPLHKYPVWLWKRLQLREGICSRLPGHYLRSLEEERTPTPVHYRPHGAKFKINPK).

Belongs to the bacterial ribosomal protein bL28 family. In terms of assembly, component of the mitochondrial large ribosomal subunit (mt-LSU). Mature mammalian 55S mitochondrial ribosomes consist of a small (28S) and a large (39S) subunit. The 28S small subunit contains a 12S ribosomal RNA (12S mt-rRNA) and 30 different proteins. The 39S large subunit contains a 16S rRNA (16S mt-rRNA), a copy of mitochondrial valine transfer RNA (mt-tRNA(Val)), which plays an integral structural role, and 52 different proteins. Interacts with OXA1L. Found in a variety of normal tissues including spleen, testes, thymus, liver, kidney, brain, adrenal, lung and retinal tissue.

The protein resides in the mitochondrion. The polypeptide is Large ribosomal subunit protein bL28m (MRPL28) (Homo sapiens (Human)).